Consider the following 291-residue polypeptide: Insulin-like growth factor-binding protein 3 (291 aa).

An N-terminal signal peptide occupies residues 1-27; the sequence is MLRARPALWAAALTALTLLRGPPAARA. Positions 28 to 134 are IGF-binding; sequence GAGTMGAGPV…LRPYLLPSAS (107 aa). The IGFBP N-terminal domain maps to 36-119; the sequence is PVVRCEPCDA…LDGRGLCANA (84 aa). Cystine bridges form between Cys-40-Cys-69, Cys-43-Cys-71, Cys-51-Cys-72, Cys-60-Cys-75, Cys-83-Cys-96, and Cys-90-Cys-116. N-linked (GlcNAc...) asparagine glycans are attached at residues Asn-118 and Asn-136. 2 disordered regions span residues 132 to 162 and 177 to 211; these read SASG…RVPV and KGHA…TEYG. Residues 146–155 are compositionally biased toward polar residues; that stretch reads MGSTENQAGP. At Ser-148 the chain carries Phosphoserine. The span at 177-190 shows a compositional bias: basic and acidic residues; it reads KGHAKDSQRYKVDY. Positions 191 to 202 are enriched in polar residues; the sequence is ESQSTDTQNFSS. N-linked (GlcNAc...) asparagine glycosylation is present at Asn-199. A Phosphoserine modification is found at Ser-201. The 76-residue stretch at 210-285 folds into the Thyroglobulin type-1 domain; it reads YGPCRREMED…DVKGKGDVHC (76 aa). Cystine bridges form between Cys-213/Cys-240, Cys-251/Cys-262, and Cys-264/Cys-285.

In terms of assembly, interacts with XLKD1. Binds IGF2 more than IGF1. Forms a ternary complex of about 140 to 150 kDa with IGF1 or IGF2 and a 85 kDa glycoprotein (ALS). Interacts with humanin; humanin competes with importin KPNB1 for binding to IGFBP3, blocking IGFBP3 nuclear import and IGFBP3-mediated apoptosis. Interacts with TMEM219. Interacts with RXRA; this interaction modulates the transcriptional activity of RXRA. Interacts with LRP1; this interaction mediates cell growth inhibition independent of IGF1. In terms of processing, phosphorylated by FAM20C in the extracellular medium. Phosphorylated by CK2; resulting in decreased nuclear localization. As to expression, plasma; expressed by most tissues.

The protein resides in the secreted. The protein localises to the nucleus. Multifunctional protein that plays a critical role in regulating the availability of IGFs such as IGF1 and IGF2 to their receptors and thereby regulates IGF-mediated cellular processes including proliferation, differentiation, and apoptosis in a cell-type specific manner. Also exhibits IGF-independent antiproliferative and apoptotic effects mediated by its receptor TMEM219/IGFBP-3R. Inhibits the positive effect of humanin on insulin sensitivity. Promotes testicular germ cell apoptosis. Acts via LRP-1/alpha2M receptor, also known as TGF-beta type V receptor, to mediate cell growth inhibition independent of IGF1. Mechanistically, induces serine-specific dephosphorylation of IRS1 or IRS2 upon ligation to its receptor, leading to the inhibitory cascade. In the nucleus, interacts with transcription factors such as retinoid X receptor-alpha/RXRA to regulate transcriptional signaling and apoptosis. The protein is Insulin-like growth factor-binding protein 3 (IGFBP3) of Bos taurus (Bovine).